The following is a 457-amino-acid chain: Transcription factor PCF7 (457 aa).

Residues 58 to 84 are a coiled coil; that stretch reads STLHYLLQEKERAQQAHEQLQIYQQQQ. The interval 95–121 is disordered; sequence RQPASRGPGGGGGGGDGGGSSGESTPV. Positions 101–115 are enriched in gly residues; it reads GPGGGGGGGDGGGSS. The 59-residue stretch at 140–198 folds into the TCP domain; sequence RKDRHSKVCTARGLRDRRVRLAAHTAIRFYDVQDRLGYDRPSKAVDWLMRNAKAAIDEL. Disordered regions lie at residues 199–231 and 263–299; these read PDRA…GFGN and KSLF…SNQQ. Positions 212–230 are enriched in polar residues; the sequence is STEQPEGTEQANSTSYGFG. A compositionally biased stretch (low complexity) spans 268 to 278; it reads SSSTASGAASA.

As to quaternary structure, forms homodimers and heterodimers.

It is found in the nucleus. Transcription activator. Binds the promoter core sequence 5'-GGNCC-3'. This is Transcription factor PCF7 (PCF7) from Oryza sativa subsp. indica (Rice).